The chain runs to 434 residues: Monodehydroascorbate reductase 1, peroxisomal (434 aa).

FAD-binding positions include 13–16 (GGVS), E40, R47, K52, I95, and 146–147 (RE). NAD(+) contacts are provided by residues 171-177 (GGYIGLE), E195, R201, and G260. 173-177 (YIGLE) lines the NADP(+) pocket. Residues R201 and G260 each contribute to the NADP(+) site. D297 contacts FAD. 313-314 (EH) lines the NAD(+) pocket. 313–314 (EH) provides a ligand contact to NADP(+). Residue V315 coordinates FAD. Residue R319 participates in L-ascorbate binding. Y348 is a binding site for FAD. NAD(+) is bound at residue Y348. Y348 provides a ligand contact to NADP(+). Position 350 (R350) interacts with L-ascorbate. Residue S416 is modified to Phosphoserine.

It belongs to the FAD-dependent oxidoreductase family. FAD serves as cofactor.

The protein resides in the peroxisome matrix. It catalyses the reaction 2 monodehydro-L-ascorbate radical + NADH + H(+) = 2 L-ascorbate + NAD(+). Catalyzes the conversion of monodehydroascorbate to ascorbate, oxidizing NADH in the process. The polypeptide is Monodehydroascorbate reductase 1, peroxisomal (Arabidopsis thaliana (Mouse-ear cress)).